The chain runs to 420 residues: MGPLLVWHRGDLRLHDHPALLEALARGPVVGLVVLDPNNLKTTPRRRAWFLENVRALREAYRARGGALWVLEGLPWEKVPEAARRLKAKAVYALTSYTPYGRYRDAKVQEALPVPLHLLPAPHLLPPDLPRAYRVYTPFARRFLGVEAPLPAPEALPKGPEEGEIPREDPGLPLPEPGEEAALAGLRAFLEAKLPRYAEERDRLDGEGGSRLSPYFALGVLSPRLAAWEAERRGGEGARKWVAELLWRDFSYHLLYHFPWMAERPLDPRFQALPWQEDEALFRAWYEGRTGVPLVDAAMRELHATGFLSNRARMNAAQFAVKHLLLPWKRCEEAFRHLLLDGDRAVNLQGWQWAGGLGVDAAPYFRVFNPVLQGERHDPEGRWLKRWAPEYPSYAPKDPVVDLEEARRRYLRLARDLARG.

A Photolyase/cryptochrome alpha/beta domain is found at 2–124 (GPLLVWHRGD…PLHLLPAPHL (123 aa)). Residues 152–175 (APEALPKGPEEGEIPREDPGLPLP) form a disordered region. Residues 159–170 (GPEEGEIPREDP) are compositionally biased toward basic and acidic residues. Position 197 (Tyr-197) interacts with FAD. Residue Arg-201 coordinates DNA. Residue 209-213 (GSRLS) participates in FAD binding. 2 interaction with DNA regions span residues 244–251 (ELLWRDFS) and 310–311 (NR). 341–343 (DGD) is a binding site for FAD. DNA is bound at residue Gln-373.

Belongs to the DNA photolyase class-1 family. Monomer. Requires FAD as cofactor.

It carries out the reaction cyclobutadipyrimidine (in DNA) = 2 pyrimidine residues (in DNA).. Its function is as follows. Involved in repair of UV radiation-induced DNA damage. Catalyzes the light-dependent monomerization (300-600 nm) of cyclobutyl pyrimidine dimers (in cis-syn configuration), which are formed between adjacent bases on the same DNA strand upon exposure to ultraviolet radiation. This chain is Deoxyribodipyrimidine photo-lyase (phr), found in Thermus thermophilus (strain ATCC BAA-163 / DSM 7039 / HB27).